A 402-amino-acid polypeptide reads, in one-letter code: Imidazolonepropionase (402 aa).

His-69 and His-71 together coordinate Fe(3+). Zn(2+) contacts are provided by His-69 and His-71. 4-imidazolone-5-propanoate contacts are provided by Arg-78, Tyr-141, and His-174. An N-formimidoyl-L-glutamate-binding site is contributed by Tyr-141. His-239 serves as a coordination point for Fe(3+). His-239 is a binding site for Zn(2+). Residue Gln-242 participates in 4-imidazolone-5-propanoate binding. Asp-314 contacts Fe(3+). Asp-314 contacts Zn(2+). 2 residues coordinate N-formimidoyl-L-glutamate: Asn-316 and Gly-318. Residue Thr-319 coordinates 4-imidazolone-5-propanoate.

Belongs to the metallo-dependent hydrolases superfamily. HutI family. Requires Zn(2+) as cofactor. It depends on Fe(3+) as a cofactor.

It is found in the cytoplasm. The enzyme catalyses 4-imidazolone-5-propanoate + H2O = N-formimidoyl-L-glutamate. Its pathway is amino-acid degradation; L-histidine degradation into L-glutamate; N-formimidoyl-L-glutamate from L-histidine: step 3/3. Catalyzes the hydrolytic cleavage of the carbon-nitrogen bond in imidazolone-5-propanoate to yield N-formimidoyl-L-glutamate. It is the third step in the universal histidine degradation pathway. This is Imidazolonepropionase from Maricaulis maris (strain MCS10) (Caulobacter maris).